The sequence spans 152 residues: Transcriptional regulator MraZ (152 aa).

2 consecutive SpoVT-AbrB domains span residues 5–52 (ASAI…PLDE) and 81–124 (AHEC…DEAA).

It belongs to the MraZ family. As to quaternary structure, forms oligomers.

The protein localises to the cytoplasm. Its subcellular location is the nucleoid. The polypeptide is Transcriptional regulator MraZ (Shewanella violacea (strain JCM 10179 / CIP 106290 / LMG 19151 / DSS12)).